A 577-amino-acid chain; its full sequence is (E)-beta-farnesene synthase (577 aa).

Residues aspartate 327, aspartate 331, aspartate 474, serine 478, and glutamate 482 each coordinate Mg(2+). A DDXXD motif motif is present at residues 327–331 (DDTFD).

The protein belongs to the terpene synthase family. Mg(2+) is required as a cofactor. It depends on Co(2+) as a cofactor. Requires Mn(2+) as cofactor. Expressed in flowers.

Its subcellular location is the cytoplasm. The catalysed reaction is (2E,6E)-farnesyl diphosphate = (E)-beta-farnesene + diphosphate. Its pathway is secondary metabolite biosynthesis; terpenoid biosynthesis. Its activity is regulated as follows. Strongly inhibited by manganese at concentration higher than 20 uM. Sesquiterpene cyclase catalyzing the production of beta-farnesene from farnesyl diphosphate. Unable to use geranyl diphosphate as substrate. The polypeptide is (E)-beta-farnesene synthase (CASC125) (Artemisia annua (Sweet wormwood)).